The chain runs to 91 residues: Late embryogenesis abundant protein EMB564 (91 aa).

Composition is skewed to basic and acidic residues over residues 1–19 (MASG…REGE) and 32–51 (EAQE…RREQ). The interval 1 to 91 (MASGQESRKE…VTIDESKFTK (91 aa)) is disordered.

Belongs to the small hydrophilic plant seed protein family.

LEA proteins are late embryonic proteins abundant in higher plant seed embryos. They may play an essential role in seed survival and in controlling water exchanges during seed desiccation and imbibition. In Zea mays (Maize), this protein is Late embryogenesis abundant protein EMB564.